Consider the following 242-residue polypeptide: Small ribosomal subunit protein uS2 (242 aa).

This sequence belongs to the universal ribosomal protein uS2 family.

The chain is Small ribosomal subunit protein uS2 from Tolumonas auensis (strain DSM 9187 / NBRC 110442 / TA 4).